Here is a 266-residue protein sequence, read N- to C-terminus: Vitamin B12-binding protein (266 aa).

Positions 1 to 22 (MAKQMFRALGALLLTLPVWLYA) are cleaved as a signal peptide. Residues 25–266 (RVITLSPANT…QLCNALSQVN (242 aa)) enclose the Fe/B12 periplasmic-binding domain. Residues Tyr-50 and 242–246 (DWFER) each bind cyanocob(III)alamin. Cys-183 and Cys-259 are joined by a disulfide.

Belongs to the BtuF family. As to quaternary structure, the complex is composed of two ATP-binding proteins (BtuD), two transmembrane proteins (BtuC) and a solute-binding protein (BtuF).

The protein resides in the periplasm. Its function is as follows. Part of the ABC transporter complex BtuCDF involved in vitamin B12 import. Binds vitamin B12 and delivers it to the periplasmic surface of BtuC. The polypeptide is Vitamin B12-binding protein (Salmonella typhi).